Consider the following 456-residue polypeptide: L-2-hydroxyglutarate dehydrogenase, mitochondrial (456 aa).

The N-terminal 20 residues, 1–20 (MLKTSFLLSKRNAVSLSRVL), are a transit peptide targeting the mitochondrion.

Belongs to the L2HGDH family. Requires FAD as cofactor.

It localises to the mitochondrion. It carries out the reaction (S)-2-hydroxyglutarate + A = 2-oxoglutarate + AH2. The chain is L-2-hydroxyglutarate dehydrogenase, mitochondrial from Nematostella vectensis (Starlet sea anemone).